Here is a 326-residue protein sequence, read N- to C-terminus: Phospho-N-acetylmuramoyl-pentapeptide-transferase (326 aa).

A run of 10 helical transmembrane segments spans residues 13–33 (ILAP…IFIP), 57–77 (GTPT…ILIM), 85–105 (EMIL…DDIL), 121–141 (MILL…NVGT), 155–175 (NLGI…TNAV), 181–201 (IDGL…IIGF), 208–228 (VAVF…FNAF), 232–252 (IFMG…IALM), 257–277 (LFVI…IIQV), and 305–325 (VKIV…GFVA).

It belongs to the glycosyltransferase 4 family. MraY subfamily. It depends on Mg(2+) as a cofactor.

It is found in the cell membrane. It carries out the reaction UDP-N-acetyl-alpha-D-muramoyl-L-alanyl-gamma-D-glutamyl-meso-2,6-diaminopimeloyl-D-alanyl-D-alanine + di-trans,octa-cis-undecaprenyl phosphate = di-trans,octa-cis-undecaprenyl diphospho-N-acetyl-alpha-D-muramoyl-L-alanyl-D-glutamyl-meso-2,6-diaminopimeloyl-D-alanyl-D-alanine + UMP. Its pathway is cell wall biogenesis; peptidoglycan biosynthesis. In terms of biological role, catalyzes the initial step of the lipid cycle reactions in the biosynthesis of the cell wall peptidoglycan: transfers peptidoglycan precursor phospho-MurNAc-pentapeptide from UDP-MurNAc-pentapeptide onto the lipid carrier undecaprenyl phosphate, yielding undecaprenyl-pyrophosphoryl-MurNAc-pentapeptide, known as lipid I. The protein is Phospho-N-acetylmuramoyl-pentapeptide-transferase of Clostridium beijerinckii (strain ATCC 51743 / NCIMB 8052) (Clostridium acetobutylicum).